A 300-amino-acid polypeptide reads, in one-letter code: Very-long-chain enoyl-CoA reductase (300 aa).

Residues 91 to 111 form a helical membrane-spanning segment; it reads SLVFICEYAGPLFVYPIFYFL. The N-linked (GlcNAc...) asparagine glycan is linked to asparagine 163. A helical membrane pass occupies residues 191-211; it reads VYLGLGLWIIGEVFNYICHIQ. The N-linked (GlcNAc...) asparagine glycan is linked to asparagine 238. A helical membrane pass occupies residues 243–263; it reads ILSWIGFSILTQTLTSWIFAL.

It belongs to the steroid 5-alpha reductase family.

It localises to the endoplasmic reticulum membrane. It carries out the reaction a very-long-chain 2,3-saturated fatty acyl-CoA + NADP(+) = a very-long-chain (2E)-enoyl-CoA + NADPH + H(+). It functions in the pathway lipid metabolism; fatty acid biosynthesis. Its function is as follows. Catalyzes the last of the four reactions of the long-chain fatty acids elongation cycle. This endoplasmic reticulum-bound enzymatic process, allows the addition of 2 carbons to the chain of long- and very long-chain fatty acids/VLCFAs per cycle. This enzyme reduces the trans-2,3-enoyl-CoA fatty acid intermediate to an acyl-CoA that can be further elongated by entering a new cycle of elongation. Thereby, it participates in the production of VLCFAs of different chain lengths that are involved in multiple biological processes as precursors of membrane lipids and lipid mediators. The protein is Very-long-chain enoyl-CoA reductase (gpsn2) of Dictyostelium discoideum (Social amoeba).